The chain runs to 766 residues: Subtilisin-like protease SBT4.15 (766 aa).

The first 23 residues, 1-23 (MVSNQRVRLFMLCFCLVNNAVIA), serve as a signal peptide directing secretion. Positions 24 to 113 (ATEDENVERK…VFKNTQRQLH (90 aa)) are cleaved as a propeptide — activation peptide. An Inhibitor I9 domain is found at 35-113 (YIVYMGEATE…VFKNTQRQLH (79 aa)). The Peptidase S8 domain occupies 117–601 (SWDFLGLVES…SGQINPRRAI (485 aa)). Catalysis depends on aspartate 144, which acts as the Charge relay system. Residue asparagine 175 is glycosylated (N-linked (GlcNAc...) asparagine). Histidine 210 functions as the Charge relay system in the catalytic mechanism. Residues asparagine 233, asparagine 376, and asparagine 465 are each glycosylated (N-linked (GlcNAc...) asparagine). Positions 365–460 (MYPLTSGSLA…YVFFEDGTKI (96 aa)) constitute a PA domain. Residue serine 543 is the Charge relay system of the active site. 3 N-linked (GlcNAc...) asparagine glycosylation sites follow: asparagine 624, asparagine 638, and asparagine 668.

It belongs to the peptidase S8 family. In terms of processing, the C-terminal propeptide is autocleaved.

Its subcellular location is the secreted. This is Subtilisin-like protease SBT4.15 from Arabidopsis thaliana (Mouse-ear cress).